The primary structure comprises 173 residues: Cytidylate kinase (173 aa).

ATP is bound at residue 7–15; that stretch reads GLAGTGTST.

The protein belongs to the cytidylate kinase family. Type 2 subfamily.

It is found in the cytoplasm. The enzyme catalyses CMP + ATP = CDP + ADP. It carries out the reaction dCMP + ATP = dCDP + ADP. The chain is Cytidylate kinase from Methanosphaera stadtmanae (strain ATCC 43021 / DSM 3091 / JCM 11832 / MCB-3).